The sequence spans 428 residues: Histone deacetylase 3 (428 aa).

The segment at 3-316 (KTVAYFYDPD…WTYETSLLVE (314 aa)) is histone deacetylase. 1D-myo-inositol 1,4,5,6-tetrakisphosphate is bound by residues His-17, Gly-21, and Lys-25. The active site involves His-135. Residues Asp-170, His-172, and Asp-259 each coordinate Zn(2+). Arg-265 lines the 1D-myo-inositol 1,4,5,6-tetrakisphosphate pocket. Basic and acidic residues-rich tracts occupy residues 388–405 (DRTD…ENYS) and 415–428 (DGDH…DVEI). Positions 388 to 428 (DRTDEADAEERGPEENYSRPEAPNEFYDGDHDNDKESDVEI) are disordered. A Phosphoserine modification is found at Ser-424.

Belongs to the histone deacetylase family. HD type 1 subfamily. As to quaternary structure, interacts with HDAC7 and HDAC9. Interacts with HDAC10, DAXX and DACH1. Found in a complex with NCOR1 and NCOR2. Component of the N-Cor repressor complex, at least composed of NCOR1, NCOR2, HDAC3, TBL1X, TBL1R, CORO2A and GPS2. Interacts with BCOR, MJD2A/JHDM3A, NRIP1, PRDM6 and SRY. Interacts with BTBD14B. Interacts with GLIS2. Interacts (via the DNA-binding domain) with NR2C1; the interaction recruits phosphorylated NR2C1 to PML bodies for sumoylation. Component of the Notch corepressor complex. Interacts with CBFA2T3 and NKAP. Interacts with APEX1; the interaction is not dependent on the acetylated status of APEX1. Interacts with and deacetylates MAPK14. Interacts with ZMYND15. Interacts with SMRT/NCOR2 and BCL6 on DNA enhancer elements. Interacts with INSM1. Interacts with XBP1; the interaction occurs in endothelial cell (EC) under disturbed flow. Interacts (via C-terminus) with CCAR2 (via N-terminus). Interacts with and deacetylates MEF2D. Interacts with BEND3. Interacts with NKAPL. Interacts with DHX36; this interaction occurs in a RNA-dependent manner. Interacts weakly with CRY1; this interaction is enhanced in the presence of FBXL3. Interacts with FBXL3 and BMAL1. Interacts with NCOR1. Interacts with RARA. Interacts with SETD5. Deubiquitinated on 'Lys-63'-linked ubiquitin chains by USP38; leading to a decreased level of histone acetylation. In terms of processing, sumoylated in vitro.

It is found in the nucleus. The protein localises to the chromosome. It localises to the cytoplasm. The protein resides in the cytosol. It catalyses the reaction N(6)-acetyl-L-lysyl-[histone] + H2O = L-lysyl-[histone] + acetate. The enzyme catalyses N(6)-acetyl-L-lysyl-[protein] + H2O = L-lysyl-[protein] + acetate. The catalysed reaction is N(6)-(2E)-butenoyl-L-lysyl-[protein] + H2O = (2E)-2-butenoate + L-lysyl-[protein]. It carries out the reaction N(6)-(2-hydroxyisobutanoyl)-L-lysyl-[protein] + H2O = 2-hydroxy-2-methylpropanoate + L-lysyl-[protein]. It catalyses the reaction N(6)-[(S)-lactoyl]-L-lysyl-[protein] + H2O = (S)-lactate + L-lysyl-[protein]. Its activity is regulated as follows. Inositol tetraphosphate (1D-myo-inositol 1,4,5,6-tetrakisphosphate) promotes the histone deacetylase activity by acting as an intermolecular glue between HDAC3 and NCOR2, thereby promoting its association with the N-Cor complex, a prerequisite for the histone deacetylase activity. Histone deacetylase that catalyzes the deacetylation of lysine residues on the N-terminal part of the core histones (H2A, H2B, H3 and H4), and some other non-histone substrates. Histone deacetylation gives a tag for epigenetic repression and plays an important role in transcriptional regulation, cell cycle progression and developmental events. Histone deacetylases act via the formation of large multiprotein complexes, such as N-Cor repressor complex, which activate the histone deacetylase activity. Participates in the BCL6 transcriptional repressor activity by deacetylating the H3 'Lys-27' (H3K27) on enhancer elements, antagonizing EP300 acetyltransferase activity and repressing proximal gene expression. Acts as a molecular chaperone for shuttling phosphorylated NR2C1 to PML bodies for sumoylation. Contributes, together with XBP1 isoform 1, to the activation of NFE2L2-mediated HMOX1 transcription factor gene expression in a PI(3)K/mTORC2/Akt-dependent signaling pathway leading to endothelial cell (EC) survival under disturbed flow/oxidative stress. Regulates both the transcriptional activation and repression phases of the circadian clock in a deacetylase activity-independent manner. During the activation phase, promotes the accumulation of ubiquitinated BMAL1 at the E-boxes and during the repression phase, blocks FBXL3-mediated CRY1/2 ubiquitination and promotes the interaction of CRY1 and BMAL1. The NCOR1-HDAC3 complex regulates the circadian expression of the core clock gene BMAL1 and the genes involved in lipid metabolism in the liver. Also functions as a deacetylase for non-histone targets, such as KAT5, MEF2D, MAPK14, RARA and STAT3. Serves as a corepressor of RARA, mediating its deacetylation and repression, leading to inhibition of RARE DNA element binding. In association with RARA, plays a role in the repression of microRNA-10a and thereby in the inflammatory response. In addition to protein deacetylase activity, also acts as a protein-lysine deacylase by recognizing other acyl groups: catalyzes removal of (2E)-butenoyl (crotonyl), lactoyl (lactyl) and 2-hydroxyisobutanoyl (2-hydroxyisobutyryl) acyl groups from lysine residues, leading to protein decrotonylation, delactylation and de-2-hydroxyisobutyrylation, respectively. Catalyzes decrotonylation of MAPRE1/EB1. Mediates delactylation NBN/NBS1, thereby inhibiting DNA double-strand breaks (DSBs) via homologous recombination (HR). The chain is Histone deacetylase 3 (HDAC3) from Pongo abelii (Sumatran orangutan).